Reading from the N-terminus, the 412-residue chain is Serine hydroxymethyltransferase (412 aa).

Residues leucine 117 and 121 to 123 (GHL) contribute to the (6S)-5,6,7,8-tetrahydrofolate site. Lysine 226 carries the N6-(pyridoxal phosphate)lysine modification. 349 to 351 (SPF) serves as a coordination point for (6S)-5,6,7,8-tetrahydrofolate.

This sequence belongs to the SHMT family. Homodimer. The cofactor is pyridoxal 5'-phosphate.

The protein resides in the cytoplasm. It catalyses the reaction (6R)-5,10-methylene-5,6,7,8-tetrahydrofolate + glycine + H2O = (6S)-5,6,7,8-tetrahydrofolate + L-serine. It functions in the pathway one-carbon metabolism; tetrahydrofolate interconversion. The protein operates within amino-acid biosynthesis; glycine biosynthesis; glycine from L-serine: step 1/1. Catalyzes the reversible interconversion of serine and glycine with tetrahydrofolate (THF) serving as the one-carbon carrier. This reaction serves as the major source of one-carbon groups required for the biosynthesis of purines, thymidylate, methionine, and other important biomolecules. Also exhibits THF-independent aldolase activity toward beta-hydroxyamino acids, producing glycine and aldehydes, via a retro-aldol mechanism. The chain is Serine hydroxymethyltransferase from Oleidesulfovibrio alaskensis (strain ATCC BAA-1058 / DSM 17464 / G20) (Desulfovibrio alaskensis).